The primary structure comprises 210 residues: Protein-methionine-sulfoxide reductase heme-binding subunit MsrQ (210 aa).

4 consecutive transmembrane segments (helical) span residues 15-35, 89-109, 122-142, and 160-180; these read DTLV…WLAW, LFAF…DLFF, PFIT…VTST, and LVYL…KADH.

This sequence belongs to the MsrQ family. Heterodimer of a catalytic subunit (MsrP) and a heme-binding subunit (MsrQ). FMN serves as cofactor. It depends on heme b as a cofactor.

It is found in the cell inner membrane. In terms of biological role, part of the MsrPQ system that repairs oxidized periplasmic proteins containing methionine sulfoxide residues (Met-O), using respiratory chain electrons. Thus protects these proteins from oxidative-stress damage caused by reactive species of oxygen and chlorine generated by the host defense mechanisms. MsrPQ is essential for the maintenance of envelope integrity under bleach stress, rescuing a wide series of structurally unrelated periplasmic proteins from methionine oxidation. MsrQ provides electrons for reduction to the reductase catalytic subunit MsrP, using the quinone pool of the respiratory chain. In Caulobacter vibrioides (strain ATCC 19089 / CIP 103742 / CB 15) (Caulobacter crescentus), this protein is Protein-methionine-sulfoxide reductase heme-binding subunit MsrQ.